Reading from the N-terminus, the 351-residue chain is DNA nickase (351 aa).

Fe cation-binding residues include histidine 241, glutamate 245, and histidine 303.

In terms of biological role, acts as a DNA nickase. The sequence is that of DNA nickase from Nostoc sp. (strain PCC 7120 / SAG 25.82 / UTEX 2576).